Here is a 206-residue protein sequence, read N- to C-terminus: Pyridoxine/pyridoxamine 5'-phosphate oxidase (206 aa).

FMN is bound by residues 49-54 (RMVLLK), 69-70 (YT), K76, and Q98. K54 serves as a coordination point for substrate. Positions 116, 120, and 124 each coordinate substrate. Residues 133–134 (QS) and W177 contribute to the FMN site. 183–185 (RLH) is a binding site for substrate. Residue R187 coordinates FMN.

The protein belongs to the pyridoxamine 5'-phosphate oxidase family. As to quaternary structure, homodimer. It depends on FMN as a cofactor.

It catalyses the reaction pyridoxamine 5'-phosphate + O2 + H2O = pyridoxal 5'-phosphate + H2O2 + NH4(+). The catalysed reaction is pyridoxine 5'-phosphate + O2 = pyridoxal 5'-phosphate + H2O2. It participates in cofactor metabolism; pyridoxal 5'-phosphate salvage; pyridoxal 5'-phosphate from pyridoxamine 5'-phosphate: step 1/1. It functions in the pathway cofactor metabolism; pyridoxal 5'-phosphate salvage; pyridoxal 5'-phosphate from pyridoxine 5'-phosphate: step 1/1. Functionally, catalyzes the oxidation of either pyridoxine 5'-phosphate (PNP) or pyridoxamine 5'-phosphate (PMP) into pyridoxal 5'-phosphate (PLP). In Jannaschia sp. (strain CCS1), this protein is Pyridoxine/pyridoxamine 5'-phosphate oxidase.